Here is a 165-residue protein sequence, read N- to C-terminus: Large ribosomal subunit protein uL10 (165 aa).

Belongs to the universal ribosomal protein uL10 family. Part of the ribosomal stalk of the 50S ribosomal subunit. The N-terminus interacts with L11 and the large rRNA to form the base of the stalk. The C-terminus forms an elongated spine to which L12 dimers bind in a sequential fashion forming a multimeric L10(L12)X complex.

Functionally, forms part of the ribosomal stalk, playing a central role in the interaction of the ribosome with GTP-bound translation factors. The polypeptide is Large ribosomal subunit protein uL10 (Burkholderia mallei (strain NCTC 10229)).